The following is a 356-amino-acid chain: Chorismate synthase (356 aa).

R46 provides a ligand contact to NADP(+). FMN is bound by residues 122–124 (RSS), 234–235 (NG), G274, 289–293 (KPTPS), and R315.

Belongs to the chorismate synthase family. Homotetramer. It depends on FMNH2 as a cofactor.

It catalyses the reaction 5-O-(1-carboxyvinyl)-3-phosphoshikimate = chorismate + phosphate. The protein operates within metabolic intermediate biosynthesis; chorismate biosynthesis; chorismate from D-erythrose 4-phosphate and phosphoenolpyruvate: step 7/7. Its function is as follows. Catalyzes the anti-1,4-elimination of the C-3 phosphate and the C-6 proR hydrogen from 5-enolpyruvylshikimate-3-phosphate (EPSP) to yield chorismate, which is the branch point compound that serves as the starting substrate for the three terminal pathways of aromatic amino acid biosynthesis. This reaction introduces a second double bond into the aromatic ring system. This Campylobacter fetus subsp. fetus (strain 82-40) protein is Chorismate synthase.